Here is a 277-residue protein sequence, read N- to C-terminus: 2-dehydro-3-deoxyphosphooctonate aldolase (277 aa).

This sequence belongs to the KdsA family.

The protein localises to the cytoplasm. It carries out the reaction D-arabinose 5-phosphate + phosphoenolpyruvate + H2O = 3-deoxy-alpha-D-manno-2-octulosonate-8-phosphate + phosphate. It participates in carbohydrate biosynthesis; 3-deoxy-D-manno-octulosonate biosynthesis; 3-deoxy-D-manno-octulosonate from D-ribulose 5-phosphate: step 2/3. Its pathway is bacterial outer membrane biogenesis; lipopolysaccharide biosynthesis. This Brucella anthropi (strain ATCC 49188 / DSM 6882 / CCUG 24695 / JCM 21032 / LMG 3331 / NBRC 15819 / NCTC 12168 / Alc 37) (Ochrobactrum anthropi) protein is 2-dehydro-3-deoxyphosphooctonate aldolase.